A 381-amino-acid polypeptide reads, in one-letter code: MGAGPVIPTRLATVRRRRPWRGVLLTLAAVAVVASIGTYLTAPRPGGAMAPASTSSTGGHALATLLGNHGVEVVVADSIADVEAAARPDSLLLVAQTQYLVDNALLDRLAKAPGDLLLVAPTSRTRTALTPQLRIAAASPFNSQPNCTLREANRAGSVQWGPSDTYQATGDLVLTSCYGGALVRFRAEGRTITVVGSSNFMTNGGLLPAGNAALAMNLAGNRPRLVWYAPDHIEGEMSSPSSLSDLIPENVHWTIWQLWLVVLLVALWKGRRIGPLVAEELPVVIRASETVEGRGRLYRSRRARDRAADALRTATLQRLRPRLGVGAGAPAPAVVTTIAQRSKADPPFVAYHLFGPAPATDNDLLQLARALDDIERQVTHS.

2 consecutive transmembrane segments (helical) span residues 22–42 and 246–266; these read GVLL…YLTA and LIPE…LLVA.

It is found in the cell membrane. This is an uncharacterized protein from Mycobacterium tuberculosis (strain ATCC 25618 / H37Rv).